We begin with the raw amino-acid sequence, 512 residues long: Kelch repeat protein C2 (512 aa).

A BTB domain is found at 2 to 67 (ESVIFSINGE…MRWKKINITV (66 aa)). Residues 102–176 (CIRMFNFSKR…LLKWIHKNPN (75 aa)) form the BACK domain. 6 Kelch repeats span residues 216–261 (IKHN…LYNC), 262–307 (LYII…VNDG), 309–354 (LYVI…FVND), 356–403 (IYVM…EYDG), 405–449 (IYAI…SCGD), and 452–498 (LIIA…THKS).

Belongs to the poxviruses Kelch family.

In Camelus, this protein is Kelch repeat protein C2.